The following is a 50-amino-acid chain: Large ribosomal subunit protein eL40 (50 aa).

This sequence belongs to the eukaryotic ribosomal protein eL40 family.

The chain is Large ribosomal subunit protein eL40 from Aeropyrum pernix (strain ATCC 700893 / DSM 11879 / JCM 9820 / NBRC 100138 / K1).